Reading from the N-terminus, the 226-residue chain is 3-dehydroquinate dehydratase (226 aa).

3-dehydroquinate-binding positions include 33–35 (EWR) and R65. H121 functions as the Proton donor/acceptor in the catalytic mechanism. The active-site Schiff-base intermediate with substrate is K146. Residues R188, S207, and Q211 each coordinate 3-dehydroquinate.

The protein belongs to the type-I 3-dehydroquinase family. As to quaternary structure, homodimer.

It catalyses the reaction 3-dehydroquinate = 3-dehydroshikimate + H2O. It functions in the pathway metabolic intermediate biosynthesis; chorismate biosynthesis; chorismate from D-erythrose 4-phosphate and phosphoenolpyruvate: step 3/7. Functionally, involved in the third step of the chorismate pathway, which leads to the biosynthesis of aromatic amino acids. Catalyzes the cis-dehydration of 3-dehydroquinate (DHQ) and introduces the first double bond of the aromatic ring to yield 3-dehydroshikimate. The sequence is that of 3-dehydroquinate dehydratase from Lactococcus lactis subsp. lactis (strain IL1403) (Streptococcus lactis).